Here is a 359-residue protein sequence, read N- to C-terminus: Probably inactive receptor-like protein kinase At5g41680 (359 aa).

Residues 59–357 enclose the Protein kinase domain; it reads AASAEILGKG…KLIQDIPTNF (299 aa). ATP-binding positions include 65–73 and Lys87; that span reads LGKGAHVTT.

This sequence belongs to the protein kinase superfamily. Ser/Thr protein kinase family.

In Arabidopsis thaliana (Mouse-ear cress), this protein is Probably inactive receptor-like protein kinase At5g41680.